We begin with the raw amino-acid sequence, 134 residues long: Translation initiation factor 2 subunit beta (134 aa).

The protein belongs to the eIF-2-beta/eIF-5 family. In terms of assembly, heterotrimer composed of an alpha, a beta and a gamma chain.

EIF-2 functions in the early steps of protein synthesis by forming a ternary complex with GTP and initiator tRNA. The polypeptide is Translation initiation factor 2 subunit beta (Pyrobaculum neutrophilum (strain DSM 2338 / JCM 9278 / NBRC 100436 / V24Sta) (Thermoproteus neutrophilus)).